The following is a 152-amino-acid chain: Ribosome maturation factor RimP (152 aa).

Belongs to the RimP family.

It localises to the cytoplasm. Its function is as follows. Required for maturation of 30S ribosomal subunits. The sequence is that of Ribosome maturation factor RimP from Paraburkholderia xenovorans (strain LB400).